Here is a 309-residue protein sequence, read N- to C-terminus: VRATEKFAPIYFFCHPLQSAETDVAERANKRPIWIMGHMVNANYQIDEFVNLGANSIETDVSFDSSANPEYTYHGVPCDCRRWCKKWEYFNNFLKALRKATTPGDSKYHEKLVLVVFDLKTGSLYDNQAYDAGKKLAKNLLQHYWNNGNNGGRAYIVLSIPNLAHYKLITGFKETLKTEGHPELMEKVGYDFSGNDNIDQVANAYKKAGVTGHVWQSDGITNCVASFIRGLDRAKKAVKNRDSSNGYINKVYYWTVDKYATTREAFDIGVDGIMTNYPDVIANVLNESAYKGKFRLATYDDNPWETFKN.

A signal peptide is located at residue Val-1. Positions 2-27 (RATEKFAPIYFFCHPLQSAETDVAER) are excised as a propeptide. His-38 is an active-site residue. Residues Glu-58 and Asp-60 each contribute to the Mg(2+) site. The active-site Nucleophile is His-74. 2 disulfides stabilise this stretch: Cys-78–Cys-84 and Cys-80–Cys-223. Asp-118 serves as a coordination point for Mg(2+). N-linked (GlcNAc...) asparagine glycosylation occurs at Asn-286.

It belongs to the arthropod phospholipase D family. Class II subfamily. It depends on Mg(2+) as a cofactor. As to expression, expressed by the venom gland.

Its subcellular location is the secreted. The enzyme catalyses an N-(acyl)-sphingosylphosphocholine = an N-(acyl)-sphingosyl-1,3-cyclic phosphate + choline. It carries out the reaction N-hexanoyl-sphing-4-enine-1-phosphocholine = N-(hexanoyl)-sphing-4-enine-1,3-cyclic phosphate + choline. The catalysed reaction is N-(dodecanoyl)-sphing-4-enine-1-phosphocholine = N-dodecanoyl-sphing-4-enine-1,3-cyclic phosphate + choline. It catalyses the reaction a 1-acyl-sn-glycero-3-phosphocholine = a 1-acyl-sn-glycero-2,3-cyclic phosphate + choline. The enzyme catalyses 1-tetradecanoyl-sn-glycero-3-phosphocholine = 1-tetradecanoyl-sn-glycero-2,3-cyclic phosphate + choline. It carries out the reaction 1-octanoyl-sn-glycero-3-phosphocholine = 1-octanoyl-sn-glycero-2,3-cyclic phosphate + choline. The catalysed reaction is 1-hexadecanoyl-sn-glycero-3-phosphocholine = 1-hexadecanoyl-sn-glycero-2,3-cyclic phosphate + choline. It catalyses the reaction an N-(acyl)-sphingosylphosphoethanolamine = an N-(acyl)-sphingosyl-1,3-cyclic phosphate + ethanolamine. The enzyme catalyses N-dodecanoyl-heptadecasphing-4-enine-1-phosphoethanolamine = N-dodecanoyl-heptadecasphing-4-enine-1,3-cyclic phosphate + ethanolamine. Its function is as follows. Dermonecrotic toxins cleave the phosphodiester linkage between the phosphate and headgroup of certain phospholipids (sphingolipid and lysolipid substrates), forming an alcohol (often choline) and a cyclic phosphate. This toxin acts on sphingomyelin (SM) with high activity and on lysophosphatidylcholine (LPC) and ceramide phosphoethanolamine (CPE) with low activity. In vivo, shows potent insecticidal activities. On mammals, induces dermonecrosis, hemolysis, increased vascular permeability, edema, inflammatory response, and platelet aggregation. This Loxosceles arizonica (Arizona brown spider) protein is Dermonecrotic toxin LarSicTox-alphaIB2bi.